We begin with the raw amino-acid sequence, 428 residues long: ATP-dependent RNA helicase RhlB (428 aa).

The Q motif signature appears at 9 to 37 (QKFSDFALHPLVVEALENKGFQYCTPIQA). A Helicase ATP-binding domain is found at 40 to 219 (LPLTLSGRDV…FEQMNNAEYV (180 aa)). ATP is bound at residue 53–60 (AQTGTGKT). The DEAD box motif lies at 165–168 (DEAD). The 146-residue stretch at 245–390 (RLLQTLIEEE…VSKYNSDALL (146 aa)) folds into the Helicase C-terminal domain. The disordered stretch occupies residues 394 to 428 (PAPKRLARTRTGNGPRRNSAPRRSGAPRNNRKRPG).

It belongs to the DEAD box helicase family. RhlB subfamily. As to quaternary structure, component of the RNA degradosome, which is a multiprotein complex involved in RNA processing and mRNA degradation.

It is found in the cytoplasm. The enzyme catalyses ATP + H2O = ADP + phosphate + H(+). DEAD-box RNA helicase involved in RNA degradation. Has RNA-dependent ATPase activity and unwinds double-stranded RNA. This Yersinia pseudotuberculosis serotype O:1b (strain IP 31758) protein is ATP-dependent RNA helicase RhlB.